Reading from the N-terminus, the 152-residue chain is 3-hydroxyacyl-[acyl-carrier-protein] dehydratase FabZ (152 aa).

Histidine 58 is a catalytic residue.

This sequence belongs to the thioester dehydratase family. FabZ subfamily.

The protein resides in the cytoplasm. The catalysed reaction is a (3R)-hydroxyacyl-[ACP] = a (2E)-enoyl-[ACP] + H2O. Involved in unsaturated fatty acids biosynthesis. Catalyzes the dehydration of short chain beta-hydroxyacyl-ACPs and long chain saturated and unsaturated beta-hydroxyacyl-ACPs. The protein is 3-hydroxyacyl-[acyl-carrier-protein] dehydratase FabZ of Prochlorococcus marinus subsp. pastoris (strain CCMP1986 / NIES-2087 / MED4).